The chain runs to 379 residues: Muconate cycloisomerase 1-1 (379 aa).

Residue Lys-169 is part of the active site. Mn(2+) contacts are provided by Asp-198, Glu-224, and Asp-247.

Belongs to the mandelate racemase/muconate lactonizing enzyme family. Homooctamer. It depends on Mn(2+) as a cofactor.

It catalyses the reaction (S)-muconolactone = cis,cis-muconate + H(+). The protein operates within aromatic compound metabolism; beta-ketoadipate pathway; 5-oxo-4,5-dihydro-2-furylacetate from catechol: step 2/3. In terms of biological role, catalyzes a syn cycloisomerization. This chain is Muconate cycloisomerase 1-1 (catB1), found in Acinetobacter lwoffii.